The sequence spans 100 residues: Large ribosomal subunit protein bL21 (100 aa).

The protein belongs to the bacterial ribosomal protein bL21 family. As to quaternary structure, part of the 50S ribosomal subunit. Contacts protein L20.

Functionally, this protein binds to 23S rRNA in the presence of protein L20. The protein is Large ribosomal subunit protein bL21 of Ureaplasma urealyticum serovar 10 (strain ATCC 33699 / Western).